A 683-amino-acid chain; its full sequence is Methionine--tRNA ligase (683 aa).

Residues 15–25 (PYANGPIHLGH) carry the 'HIGH' region motif. Residues cysteine 146, cysteine 149, cysteine 159, and cysteine 162 each coordinate Zn(2+). The 'KMSKS' region signature appears at 332-336 (KMSKS). ATP is bound at residue lysine 335. Residues 581–683 (DFFKVDLRVA…AGAKAGQRVK (103 aa)) enclose the tRNA-binding domain.

This sequence belongs to the class-I aminoacyl-tRNA synthetase family. MetG type 1 subfamily. As to quaternary structure, homodimer. It depends on Zn(2+) as a cofactor.

The protein localises to the cytoplasm. The catalysed reaction is tRNA(Met) + L-methionine + ATP = L-methionyl-tRNA(Met) + AMP + diphosphate. Is required not only for elongation of protein synthesis but also for the initiation of all mRNA translation through initiator tRNA(fMet) aminoacylation. The polypeptide is Methionine--tRNA ligase (Histophilus somni (strain 129Pt) (Haemophilus somnus)).